The chain runs to 448 residues: Ribosomal protein uS12 methylthiotransferase RimO (448 aa).

Residues 6–116 (PKVGIVSLGC…VVEAVHAAIP (111 aa)) enclose the MTTase N-terminal domain. [4Fe-4S] cluster is bound by residues Cys-15, Cys-51, Cys-80, Cys-147, Cys-151, and Cys-154. A Radical SAM core domain is found at 133-371 (LTPHHYAYLK…EAARQIADER (239 aa)). In terms of domain architecture, TRAM spans 373–439 (AAKEGTRIEV…DYDLWGDVVE (67 aa)).

The protein belongs to the methylthiotransferase family. RimO subfamily. It depends on [4Fe-4S] cluster as a cofactor.

Its subcellular location is the cytoplasm. It catalyses the reaction L-aspartate(89)-[ribosomal protein uS12]-hydrogen + (sulfur carrier)-SH + AH2 + 2 S-adenosyl-L-methionine = 3-methylsulfanyl-L-aspartate(89)-[ribosomal protein uS12]-hydrogen + (sulfur carrier)-H + 5'-deoxyadenosine + L-methionine + A + S-adenosyl-L-homocysteine + 2 H(+). In terms of biological role, catalyzes the methylthiolation of an aspartic acid residue of ribosomal protein uS12. The protein is Ribosomal protein uS12 methylthiotransferase RimO of Paramagnetospirillum magneticum (strain ATCC 700264 / AMB-1) (Magnetospirillum magneticum).